Consider the following 369-residue polypeptide: Histidinol-phosphate aminotransferase 2 (369 aa).

Lys-231 carries the N6-(pyridoxal phosphate)lysine modification.

This sequence belongs to the class-II pyridoxal-phosphate-dependent aminotransferase family. Histidinol-phosphate aminotransferase subfamily. In terms of assembly, homodimer. Pyridoxal 5'-phosphate is required as a cofactor.

It catalyses the reaction L-histidinol phosphate + 2-oxoglutarate = 3-(imidazol-4-yl)-2-oxopropyl phosphate + L-glutamate. It participates in amino-acid biosynthesis; L-histidine biosynthesis; L-histidine from 5-phospho-alpha-D-ribose 1-diphosphate: step 7/9. The chain is Histidinol-phosphate aminotransferase 2 from Legionella pneumophila subsp. pneumophila (strain Philadelphia 1 / ATCC 33152 / DSM 7513).